Reading from the N-terminus, the 71-residue chain is Putative membrane protein insertion efficiency factor (71 aa).

It belongs to the UPF0161 family.

It is found in the cell membrane. Its function is as follows. Could be involved in insertion of integral membrane proteins into the membrane. The chain is Putative membrane protein insertion efficiency factor from Acetivibrio thermocellus (strain ATCC 27405 / DSM 1237 / JCM 9322 / NBRC 103400 / NCIMB 10682 / NRRL B-4536 / VPI 7372) (Clostridium thermocellum).